Consider the following 91-residue polypeptide: Bacterial microcompartment shell protein PduJ (91 aa).

The BMC domain occupies 4-88 (ALGLVETKGL…PHSDVEAILP (85 aa)).

The protein belongs to the bacterial microcompartments protein family. In terms of assembly, homohexamer with a central pore of about 5.7 Angstroms in diameter. Interacts with PduP, which targets PduP to the BMC.

Its subcellular location is the bacterial microcompartment. Its pathway is polyol metabolism; 1,2-propanediol degradation. Functionally, one of the major shell proteins of the bacterial microcompartment (BMC) dedicated to 1,2-propanediol (1,2-PD) degradation. The isolated BMC shell component protein ratio for J:A:B':B:K:T:U is approximately 15:10:7:6:1:1:2. At least one of PduA or PduJ is required for BMC assembly; it must be encoded as the first gene in the pdu operon. Required for structural integrity of BMCs and to mitigate propionaldehyde toxicity, probably joins facets responsible for BMC closure. Edge residues (particularly Lys-25) are important for function and assembly of the BMC. 80% identical to PduA; although their pore regions appear structurally identical, unlike PduA plays no role in 1,2-PD diffusion into or out of the BMC shell. If pduJ is cloned in the chromosomal position of pduA it is able to complement a pduA deletion; it then has a functional pore as it assumes the transport functions of PduA. Overexpression of this protein leads to aberrant filaments that extend the length of the cell, cross the cleavage furrow and impair division. The filaments form nanotubes with a hollow center. Modeling suggests PduJ is probably the hub for binding multiple enzymes to the interior of the BMC; modeling suggests PduC, PduD, PduG and PduM are targeted to PduJ. The 1,2-propanediol (1,2-PD) degradation bacterial microcompartment (BMC) concentrates low levels of 1,2-PD catabolic enzymes, concentrates volatile reaction intermediates thus enhancing pathway flux and keeps the level of toxic, mutagenic propionaldehyde low. This chain is Bacterial microcompartment shell protein PduJ, found in Salmonella typhimurium (strain LT2 / SGSC1412 / ATCC 700720).